The primary structure comprises 452 residues: MSRTCLAVILAAGDSTRMKSAMSKVLHPVAGLPMIAHVMQAIAASDIADVALVVGRDADKVTKAASIKGLSVTPFVQTERLGTGHAVLTAREALARGYDDILVAYGDAPLITPGPLLAARAALADGNDIAVIGFHTEKPTGYGRLLVEDGELVAIREEKDASDEERKVTWCNSGLMAINGAKALDLLGRIGNANAKGEYYLTDLVEIIRSLGGKAVAVDAPEAELAGCNNRAELAVIEKLWQERRRHELMLSGVSMIAPETVFLAYDTVLAQDVLIEPNVVFGPGVTVESGAVIHAFSHLEGAHVASGATVGPFARLRPGANLGEGSKVGNFCEVKKAEIGAGAKINHLTYIGDAFIGAETNIGAGTITCNYDGVNKHETRIGANAFIGSNSALVAPVTIGDGAFIASGSVITDDVPADALALGRARQEIKPERAKIIRERNMAIKAFSGKV.

The interval 1–231 (MSRTCLAVIL…EAELAGCNNR (231 aa)) is pyrophosphorylase. UDP-N-acetyl-alpha-D-glucosamine-binding positions include 10-13 (LAAG), K24, Q77, 82-83 (GT), 105-107 (YGD), G143, E157, N172, and N229. Residue D107 coordinates Mg(2+). Residue N229 participates in Mg(2+) binding. The interval 232–252 (AELAVIEKLWQERRRHELMLS) is linker. An N-acetyltransferase region spans residues 253-452 (GVSMIAPETV…MAIKAFSGKV (200 aa)). UDP-N-acetyl-alpha-D-glucosamine is bound by residues R318 and K336. The active-site Proton acceptor is the H348. Y351 and N362 together coordinate UDP-N-acetyl-alpha-D-glucosamine. Residues A365, 371–372 (NY), S390, S408, and R425 contribute to the acetyl-CoA site.

This sequence in the N-terminal section; belongs to the N-acetylglucosamine-1-phosphate uridyltransferase family. The protein in the C-terminal section; belongs to the transferase hexapeptide repeat family. Homotrimer. Requires Mg(2+) as cofactor.

It localises to the cytoplasm. It catalyses the reaction alpha-D-glucosamine 1-phosphate + acetyl-CoA = N-acetyl-alpha-D-glucosamine 1-phosphate + CoA + H(+). The catalysed reaction is N-acetyl-alpha-D-glucosamine 1-phosphate + UTP + H(+) = UDP-N-acetyl-alpha-D-glucosamine + diphosphate. The protein operates within nucleotide-sugar biosynthesis; UDP-N-acetyl-alpha-D-glucosamine biosynthesis; N-acetyl-alpha-D-glucosamine 1-phosphate from alpha-D-glucosamine 6-phosphate (route II): step 2/2. It participates in nucleotide-sugar biosynthesis; UDP-N-acetyl-alpha-D-glucosamine biosynthesis; UDP-N-acetyl-alpha-D-glucosamine from N-acetyl-alpha-D-glucosamine 1-phosphate: step 1/1. Its pathway is bacterial outer membrane biogenesis; LPS lipid A biosynthesis. Catalyzes the last two sequential reactions in the de novo biosynthetic pathway for UDP-N-acetylglucosamine (UDP-GlcNAc). The C-terminal domain catalyzes the transfer of acetyl group from acetyl coenzyme A to glucosamine-1-phosphate (GlcN-1-P) to produce N-acetylglucosamine-1-phosphate (GlcNAc-1-P), which is converted into UDP-GlcNAc by the transfer of uridine 5-monophosphate (from uridine 5-triphosphate), a reaction catalyzed by the N-terminal domain. This is Bifunctional protein GlmU from Allorhizobium ampelinum (strain ATCC BAA-846 / DSM 112012 / S4) (Agrobacterium vitis (strain S4)).